Reading from the N-terminus, the 926-residue chain is Storkhead-box protein 2 (926 aa).

7 disordered regions span residues 1–32 (MKKT…RSEK), 338–391 (EEEK…HLDI), 452–529 (EMPF…SYID), 564–588 (KEPS…YGEL), 632–672 (GVKK…GGVA), 724–803 (LKSH…GTMQ), and 825–926 (LAPK…VTSV). Residues 18–32 (FSDRASDRMRSRSEK) are compositionally biased toward basic and acidic residues. The span at 353 to 378 (HSGRSKKSRTHRKSHGKSRSHSKTRV) shows a compositional bias: basic residues. Positions 379–391 (SKGDPSDGSHLDI) are enriched in basic and acidic residues. A compositionally biased stretch (basic residues) spans 463–472 (SHSKVHRSHS). Basic and acidic residues predominate over residues 473–495 (HTQDRRSRNERSNKAKERSRSMD). Residues 518 to 529 (QDDQTPSQSYID) are compositionally biased toward polar residues. The span at 632–658 (GVKKLSPSDRQVPHSSREPVGHKEESP) shows a compositional bias: basic and acidic residues. A compositionally biased stretch (polar residues) spans 746 to 769 (LGTSAAQAMPASQRQQESGGNQEA). Residues 785–799 (GANKNTEEEKNREDV) show a composition bias toward basic and acidic residues. 2 stretches are compositionally biased toward polar residues: residues 847-884 (MDSS…QNPA) and 914-926 (KPSN…VTSV).

The sequence is that of Storkhead-box protein 2 (STOX2) from Homo sapiens (Human).